The following is a 413-amino-acid chain: Probable tRNA sulfurtransferase (413 aa).

Positions 61–171 constitute a THUMP domain; it reads TRVLDRVTRV…EDGTYIFTEK (111 aa). ATP-binding positions include 189 to 190, 214 to 215, arginine 275, glycine 297, and glutamine 306; these read ML and HF.

Belongs to the ThiI family.

The protein resides in the cytoplasm. It carries out the reaction [ThiI sulfur-carrier protein]-S-sulfanyl-L-cysteine + a uridine in tRNA + 2 reduced [2Fe-2S]-[ferredoxin] + ATP + H(+) = [ThiI sulfur-carrier protein]-L-cysteine + a 4-thiouridine in tRNA + 2 oxidized [2Fe-2S]-[ferredoxin] + AMP + diphosphate. The enzyme catalyses [ThiS sulfur-carrier protein]-C-terminal Gly-Gly-AMP + S-sulfanyl-L-cysteinyl-[cysteine desulfurase] + AH2 = [ThiS sulfur-carrier protein]-C-terminal-Gly-aminoethanethioate + L-cysteinyl-[cysteine desulfurase] + A + AMP + 2 H(+). Its pathway is cofactor biosynthesis; thiamine diphosphate biosynthesis. In terms of biological role, catalyzes the ATP-dependent transfer of a sulfur to tRNA to produce 4-thiouridine in position 8 of tRNAs, which functions as a near-UV photosensor. Also catalyzes the transfer of sulfur to the sulfur carrier protein ThiS, forming ThiS-thiocarboxylate. This is a step in the synthesis of thiazole, in the thiamine biosynthesis pathway. The sulfur is donated as persulfide by IscS. This Natranaerobius thermophilus (strain ATCC BAA-1301 / DSM 18059 / JW/NM-WN-LF) protein is Probable tRNA sulfurtransferase.